We begin with the raw amino-acid sequence, 202 residues long: MATNITWHPNLTYDERKALRKQDGCTIWLTGLSASGKSTIACALEQLLLQKNLSAYRLDGDNIRFGLNKDLGFSEKDRNENIRRISEVSKLFADSCAISITSFISPYRVDRDRARELHKEAGLKFIEIFVDVPLEVAEQRDPKGLYKKAREGVIKEFTGISAPYEAPKAPELHLRTDQKTVEECATIIYEYLISEKIIRKHL.

Position 31–38 (31–38) interacts with ATP; it reads GLSASGKS. Ser105 serves as the catalytic Phosphoserine intermediate.

Belongs to the APS kinase family.

It carries out the reaction adenosine 5'-phosphosulfate + ATP = 3'-phosphoadenylyl sulfate + ADP + H(+). It functions in the pathway sulfur metabolism; hydrogen sulfide biosynthesis; sulfite from sulfate: step 2/3. Catalyzes the synthesis of activated sulfate. The polypeptide is Adenylyl-sulfate kinase (MET14) (Saccharomyces cerevisiae (strain ATCC 204508 / S288c) (Baker's yeast)).